The following is a 596-amino-acid chain: Bromodomain-containing protein 9 (596 aa).

The segment covering 1 to 10 (MGKKHKKHKS) has biased composition (basic residues). Disordered stretches follow at residues 1 to 31 (MGKKHKKHKSEWRSYDAGELGSPGDQSQYYV) and 49 to 119 (EVTE…SEGE). Over residues 61 to 73 (SFYEDRSDHERER) the composition is skewed to basic and acidic residues. Basic residues predominate over residues 74-84 (HKEKKKKKKKK). The segment covering 85–98 (SEKEKDKYLDEDER) has biased composition (basic and acidic residues). The span at 99–109 (RRRKEEKKRKR) shows a compositional bias: basic residues. Positions 148–252 (NESTPLQQLL…HTGFKMMSKQ (105 aa)) constitute a Bromo domain. The segment at 226-228 (TYN) is histone H4K5ac H4K8ac and histone H4K5bu H4K8bu binding. Over residues 537-547 (DFHDVHNDRGG) the composition is skewed to basic and acidic residues. Residues 537 to 596 (DFHDVHNDRGGSRPSSSSSVSNNSERDHHLGSPSRISVGEQQDIHDPYEFLQSPETENQN) are disordered. Residues 548–559 (SRPSSSSSVSNN) show a composition bias toward low complexity.

In terms of assembly, binds acetylated histones H3 and H4. Binds butyrylated histone H4.

The protein resides in the nucleus. Plays a role in chromatin remodeling and regulation of transcription. Acts as a chromatin reader that recognizes and binds acylated histones: binds histones that are acetylated and/or butyrylated. This chain is Bromodomain-containing protein 9 (brd9), found in Xenopus tropicalis (Western clawed frog).